Here is a 486-residue protein sequence, read N- to C-terminus: Adenylate kinase 8 (486 aa).

2 adenylate kinase regions span residues 58 to 258 and 269 to 471; these read PRII…NFIC and PRIL…SRLV. 67–72 provides a ligand contact to ATP; that stretch reads ASGKKT. An NMP 1 region spans residues 87 to 112; sequence TFCDILKDDSDLTRAAQSYYDKKQNV. AMP is bound by residues 139-142 and Arg202; that span reads AIPK. Residues 176–205 are LID 1; that stretch reads GKRIDPVTGDVYHVTFMWPESEEVAQRLET. 278–283 serves as a coordination point for ATP; sequence GAGRNL. The interval 298-327 is NMP 2; it reads CCGELLKAVSADESHMGELIKPYLESEQQV. AMP is bound by residues 325–327 and 354–357; these read QQV and GFPR. Residues 391–424 form an LID 2 region; sequence LRAVDPVTGEWYHSVYKPPPGPEVQARLRFNPQH. Arg392 contacts ATP. Arg432 is a binding site for AMP.

This sequence belongs to the adenylate kinase family.

The protein resides in the cytoplasm. The protein localises to the cytosol. The catalysed reaction is AMP + ATP = 2 ADP. It catalyses the reaction a 2'-deoxyribonucleoside 5'-diphosphate + ATP = a 2'-deoxyribonucleoside 5'-triphosphate + ADP. It carries out the reaction a ribonucleoside 5'-diphosphate + ATP = a ribonucleoside 5'-triphosphate + ADP. In terms of biological role, nucleoside monophosphate (NMP) kinase that catalyzes the reversible transfer of the terminal phosphate group between nucleoside triphosphates and monophosphates. Has highest activity toward AMP, and weaker activity toward dAMP, CMP and dCMP. Also displays broad nucleoside diphosphate kinase activity. This chain is Adenylate kinase 8 (ak8), found in Danio rerio (Zebrafish).